Reading from the N-terminus, the 209-residue chain is NAD(P)H-quinone oxidoreductase subunit I (209 aa).

4Fe-4S ferredoxin-type domains follow at residues 55-84 (GRIH…VDWE) and 95-124 (KHYS…MTEE). [4Fe-4S] cluster is bound by residues Cys64, Cys67, Cys70, Cys74, Cys104, Cys107, Cys110, and Cys114.

Belongs to the complex I 23 kDa subunit family. NDH-1 is composed of at least 11 different subunits. The cofactor is [4Fe-4S] cluster.

Its subcellular location is the cellular thylakoid membrane. It catalyses the reaction a plastoquinone + NADH + (n+1) H(+)(in) = a plastoquinol + NAD(+) + n H(+)(out). It carries out the reaction a plastoquinone + NADPH + (n+1) H(+)(in) = a plastoquinol + NADP(+) + n H(+)(out). NDH-1 shuttles electrons from an unknown electron donor, via FMN and iron-sulfur (Fe-S) centers, to quinones in the respiratory and/or the photosynthetic chain. The immediate electron acceptor for the enzyme in this species is believed to be plastoquinone. Couples the redox reaction to proton translocation, and thus conserves the redox energy in a proton gradient. In Trichodesmium erythraeum (strain IMS101), this protein is NAD(P)H-quinone oxidoreductase subunit I.